The sequence spans 85 residues: Small ribosomal subunit protein uS17 (85 aa).

This sequence belongs to the universal ribosomal protein uS17 family. In terms of assembly, part of the 30S ribosomal subunit.

In terms of biological role, one of the primary rRNA binding proteins, it binds specifically to the 5'-end of 16S ribosomal RNA. In Lachnospira eligens (strain ATCC 27750 / DSM 3376 / VPI C15-48 / C15-B4) (Eubacterium eligens), this protein is Small ribosomal subunit protein uS17.